A 561-amino-acid polypeptide reads, in one-letter code: Asparagine synthetase [glutamine-hydrolyzing] (561 aa).

The active-site For GATase activity is the Cys-2. Positions 2–191 (CGIWALFGSD…PGHYEVLDLK (190 aa)) constitute a Glutamine amidotransferase type-2 domain. Residues 49–53 (RLAVV), 75–77 (NGE), and Asp-97 contribute to the L-glutamine site. An Asparagine synthetase domain is found at 213-536 (HALYDSVEKL…PGRADWLTHY (324 aa)). Residues Leu-256, Ile-288, and 363–364 (SG) contribute to the ATP site. The residue at position 385 (Lys-385) is an N6-acetyllysine. Thr-545 carries the post-translational modification Phosphothreonine. At Ser-557 the chain carries Phosphoserine.

It carries out the reaction L-aspartate + L-glutamine + ATP + H2O = L-asparagine + L-glutamate + AMP + diphosphate + H(+). It functions in the pathway amino-acid biosynthesis; L-asparagine biosynthesis; L-asparagine from L-aspartate (L-Gln route): step 1/1. The polypeptide is Asparagine synthetase [glutamine-hydrolyzing] (ASNS) (Mesocricetus auratus (Golden hamster)).